Here is a 428-residue protein sequence, read N- to C-terminus: Succinyl-CoA--L-malate CoA-transferase alpha subunit (428 aa).

The tract at residues methionine 1 to glutamine 31 is disordered. Positions proline 21–glutamine 31 are enriched in polar residues. Aspartate 200 (nucleophile) is an active-site residue.

Belongs to the CoA-transferase III family. Forms a large complex composed of six heterodimers (alpha, beta).

It catalyses the reaction succinyl-CoA + (S)-malate = (S)-malyl-CoA + succinate. The catalysed reaction is (3S)-citramalate + succinyl-CoA = (3S)-citramalyl-CoA + succinate. Its function is as follows. Involved in the 3-hydroxypropionate cycle used for autotrophic carbon dioxide fixation. Catalyzes the transfer of CoA moiety from succinyl-CoA to L-malate to yield L-malyl-CoA. It is highly specific for succinyl-CoA as the CoA donor, however it can accept L-citramalate instead of L-malate as the CoA acceptor. This chain is Succinyl-CoA--L-malate CoA-transferase alpha subunit (smtA), found in Chloroflexus aurantiacus.